The following is a 465-amino-acid chain: Chromosomal replication initiator protein DnaA (465 aa).

A domain I, interacts with DnaA modulators region spans residues 1–85; sequence MSGFWESCLQ…IALVIGSGKA (85 aa). Positions 85–129 are domain II; it reads ATAARIQATTTDSGQNAPANPATTSEKRTAASEKARGKGSNYEKS. The segment covering 93–108 has biased composition (polar residues); that stretch reads TTTDSGQNAPANPATT. The tract at residues 93–125 is disordered; it reads TTTDSGQNAPANPATTSEKRTAASEKARGKGSN. Residues 109 to 125 show a composition bias toward basic and acidic residues; the sequence is SEKRTAASEKARGKGSN. The interval 130–346 is domain III, AAA+ region; sequence RLFPSFTFDN…GALKKVLAYS (217 aa). Residues Gly-174, Gly-176, Lys-177, and Thr-178 each contribute to the ATP site. The tract at residues 347-465 is domain IV, binds dsDNA; the sequence is SFHGRVIALD…LHVLLQVLKG (119 aa).

This sequence belongs to the DnaA family. As to quaternary structure, oligomerizes as a right-handed, spiral filament on DNA at oriC.

It is found in the cytoplasm. Functionally, plays an essential role in the initiation and regulation of chromosomal replication. ATP-DnaA binds to the origin of replication (oriC) to initiate formation of the DNA replication initiation complex once per cell cycle. Binds the DnaA box (a 9 base pair repeat at the origin) and separates the double-stranded (ds)DNA. Forms a right-handed helical filament on oriC DNA; dsDNA binds to the exterior of the filament while single-stranded (ss)DNA is stabiized in the filament's interior. The ATP-DnaA-oriC complex binds and stabilizes one strand of the AT-rich DNA unwinding element (DUE), permitting loading of DNA polymerase. After initiation quickly degrades to an ADP-DnaA complex that is not apt for DNA replication. Binds acidic phospholipids. The sequence is that of Chromosomal replication initiator protein DnaA from Dechloromonas aromatica (strain RCB).